A 551-amino-acid polypeptide reads, in one-letter code: Glucans biosynthesis protein D (551 aa).

The tat-type signal signal peptide spans 1–32; the sequence is MDRRRFIKGSMAMAAVCGTSGIASLFSQAAFA.

Belongs to the OpgD/OpgG family. In terms of processing, predicted to be exported by the Tat system. The position of the signal peptide cleavage has not been experimentally proven.

Its subcellular location is the periplasm. The protein operates within glycan metabolism; osmoregulated periplasmic glucan (OPG) biosynthesis. Functionally, probably involved in the control of the structural glucose backbone of osmoregulated periplasmic glucans (OPGs). The protein is Glucans biosynthesis protein D of Escherichia coli O9:H4 (strain HS).